The sequence spans 300 residues: MAAASAPVPGPGGASSTARGRIPAPATPYQEDIARYWNNEARPVNLRLGDVDGLYHHHYGIGAVDHAALGDPGDGGYEARLIAELHRLESAQAEFLLDHLGPVGPGDTLVDAGCGRGGSMVMAHQRFGCKVEGVTLSAAQAEFGNRRARELGIDDHVRSRVCNMLDTPFEKGTVAASWNNESSMYVDLHDVFAEHSRFLRVGGRYVTVTGCWNPRYGQPSKWVSQINAHFECNIHSRREYLRAMADNRLVPQTVVDLTPETLPYWELRATSSLVTGIEEAFIESYRDGSFQYVLIAADRV.

Residues 1–24 (MAAASAPVPGPGGASSTARGRIPA) are disordered.

Belongs to the geranyl diphosphate 2-C-methyltransferase family. Mg(2+) is required as a cofactor.

The enzyme catalyses (2E)-geranyl diphosphate + S-adenosyl-L-methionine = (E)-2-methylgeranyl diphosphate + S-adenosyl-L-homocysteine + H(+). Functionally, catalyzes the SAM-dependent methylation of geranyl diphosphate (GPP) to yield (E)-2-methylgeranyl diphosphate (2-MeGPP). In Streptomyces lasalocidi (Streptomyces lasaliensis), this protein is Geranyl diphosphate 2-C-methyltransferase (gdpmt).